The following is a 420-amino-acid chain: MLKAVILIGGPQKGTRFRPLSFEVPKPLFPVAGVPMIQHHIEACAQVPGMQEILLIGFYQPDEALTQFLEAAQQEFNLPVRYLQEFTPLGTGGGLYHFRDQILAGAPEAFFVLNADVCSDFPLSAMLDAHRLQRHPFLLLGTTANRTQSLNYGCIVENPQTHEVLHYVEKPSTFISDIINCGIYLFSPEALKPLRDVFQRNQQDGQLEESPGSWPGAGTIRLEQDVFSALAGQGQIYVHLTDGIWSQIKSAGSALYASRLYLGRYQITHPERLARHTAGGPRIRGNVYIHPTAKVAPSAVLGPNVSIGKGVTIGEGVRLRESIVLHGATLQEHTCVLHSIVGWGSTVGRWARVEGTPNDPNPNDPRARMDSESLFKDGKLLPAITILGCRVRIPAEVLILNSIVLPHKELSRSFTNQIIL.

The segment at 2-251 (LKAVILIGGP…DGIWSQIKSA (250 aa)) is substrate-binding domain. The GDP-alpha-D-mannose site is built by Glu85 and Gln247. Residues 273-420 (LARHTAGGPR…SRSFTNQIIL (148 aa)) are hexapeptide repeat domain. Residues 356–384 (TPNDPNPNDPRARMDSESLFKDGKLLPAI) are C-loop.

The protein belongs to the transferase hexapeptide repeat family. Component of the GMPPA-GMPPB mannose-1-phosphate guanylyltransferase complex composed of 4 GMPPA subunits and 8 GMPPB subunits; the complex is organized into three layers, a central layer made up of 2 GMPPA dimers sandwiched between two layers each made up of 2 GMPPB dimers.

Its subcellular location is the cytoplasm. Its function is as follows. Regulatory subunit of the GMPPA-GMPPB mannose-1-phosphate guanylyltransferase complex; reduces the catalytic activity of GMPPB when part of the complex. Mediates allosteric feedback inhibition of GMPPB catalytic activity upon binding GDP-alpha-D-mannose. Together with GMPPB regulates GDP-alpha-D-mannose levels. The chain is Mannose-1-phosphate guanylyltransferase regulatory subunit alpha (Gmppa) from Rattus norvegicus (Rat).